Consider the following 353-residue polypeptide: UPF0283 membrane protein KPN78578_12740 (353 aa).

3 consecutive transmembrane segments (helical) span residues M70 to T90, W99 to L119, and E213 to W233.

It belongs to the UPF0283 family.

It localises to the cell inner membrane. The polypeptide is UPF0283 membrane protein KPN78578_12740 (Klebsiella pneumoniae subsp. pneumoniae (strain ATCC 700721 / MGH 78578)).